The primary structure comprises 1368 residues: DNA-directed RNA polymerase subunit beta (1368 aa).

It belongs to the RNA polymerase beta chain family. As to quaternary structure, the RNAP catalytic core consists of 2 alpha, 1 beta, 1 beta' and 1 omega subunit. When a sigma factor is associated with the core the holoenzyme is formed, which can initiate transcription.

The enzyme catalyses RNA(n) + a ribonucleoside 5'-triphosphate = RNA(n+1) + diphosphate. DNA-dependent RNA polymerase catalyzes the transcription of DNA into RNA using the four ribonucleoside triphosphates as substrates. The sequence is that of DNA-directed RNA polymerase subunit beta from Burkholderia thailandensis (strain ATCC 700388 / DSM 13276 / CCUG 48851 / CIP 106301 / E264).